Here is a 341-residue protein sequence, read N- to C-terminus: Uroporphyrinogen decarboxylase (341 aa).

Substrate is bound by residues arginine 23–arginine 27, aspartate 73, tyrosine 148, serine 203, and histidine 318.

The protein belongs to the uroporphyrinogen decarboxylase family. As to quaternary structure, homodimer.

The protein localises to the cytoplasm. It carries out the reaction uroporphyrinogen III + 4 H(+) = coproporphyrinogen III + 4 CO2. It participates in porphyrin-containing compound metabolism; protoporphyrin-IX biosynthesis; coproporphyrinogen-III from 5-aminolevulinate: step 4/4. In terms of biological role, catalyzes the decarboxylation of four acetate groups of uroporphyrinogen-III to yield coproporphyrinogen-III. The chain is Uroporphyrinogen decarboxylase from Brucella anthropi (strain ATCC 49188 / DSM 6882 / CCUG 24695 / JCM 21032 / LMG 3331 / NBRC 15819 / NCTC 12168 / Alc 37) (Ochrobactrum anthropi).